Reading from the N-terminus, the 85-residue chain is Beta-insect depressant toxin BmKITb (85 aa).

The signal sequence occupies residues 1–21; it reads MKLFLLLVISASMLIDGLVNA. The LCN-type CS-alpha/beta domain occupies 22-82; that stretch reads DGYIRGSNGC…TWKSESNTCG (61 aa). Intrachain disulfides connect Cys31–Cys81, Cys35–Cys56, Cys42–Cys63, and Cys46–Cys65. Glycine amide is present on Gly82.

In terms of tissue distribution, expressed by the venom gland.

It localises to the secreted. Functionally, depressant insect beta-toxins cause a transient contraction paralysis followed by a slow flaccid paralysis. They bind voltage-independently at site-4 of sodium channels (Nav) and shift the voltage of activation toward more negative potentials thereby affecting sodium channel activation and promoting spontaneous and repetitive firing. However, this toxin has some characteristics of excitatory toxins such as bursts of activity after the membrane has been hyperpolarized. This toxin is active only on insects. The polypeptide is Beta-insect depressant toxin BmKITb (Olivierus martensii (Manchurian scorpion)).